The following is a 984-amino-acid chain: METKGYHSLPEGLDMERRWGQVSQAVERSSLGPTERTDENNYMEIVNVSCVSGAIPNNSTQGSSKEKQELLPCLQQDNNRPGILTSDIKTELESKELSATVAESMGLYMDSVRDADYSYEQQNQQGSMSPAKIYQNVEQLVKFYKGNGHRPSTLSCVNTPLRSFMSDSGSSVNGGVMRAVVKSPIMCHEKSPSVCSPLNMTSSVCSPAGINSVSSTTASFGSFPVHSPITQGTPLTCSPNVENRGSRSHSPAHASNVGSPLSSPLSSMKSSISSPPSHCSVKSPVSSPNNVTLRSSVSSPANINNSRCSVSSPSNTNNRSTLSSPAASTVGSICSPVNNAFSYTASGTSAGSSTLRDVVPSPDTQEKGAQEVPFPKTEEVESAISNGVTGQLNIVQYIKPEPDGAFSSSCLGGNSKINSDSSFSVPIKQESTKHSCSGTSFKGNPTVNPFPFMDGSYFSFMDDKDYYSLSGILGPPVPGFDGNCEGSGFPVGIKQEPDDGSYYPEASIPSSAIVGVNSGGQSFHYRIGAQGTISLSRSARDQSFQHLSSFPPVNTLVESWKSHGDLSSRRSDGYPVLEYIPENVSSSTLRSVSTGSSRPSKICLVCGDEASGCHYGVVTCGSCKVFFKRAVEGQHNYLCAGRNDCIIDKIRRKNCPACRLQKCLQAGMNLGARKSKKLGKLKGIHEEQPQQQQPPPPPPPPQSPEEGTTYIAPAKEPSVNTALVPQLSTISRALTPSPVMVLENIEPEIVYAGYDSSKPDTAENLLSTLNRLAGKQMIQVVKWAKVLPGFKNLPLEDQITLIQYSWMCLSSFALSWRSYKHTNSQFLYFAPDLVFNEEKMHQSAMYELCQGMHQISLQFVRLQLTFEEYTIMKVLLLLSTIPKDGLKSQAAFEEMRTNYIKELRKMVTKCPNNSGQSWQRFYQLTKLLDSMHDLVSDLLEFCFYTFRESHALKVEFPAMLVEIISDQLPKVESGNAKPLYFHRK.

The interval 1-602 (METKGYHSLP…STGSSRPSKI (602 aa)) is modulating. Over residues 231–243 (QGTPLTCSPNVEN) the composition is skewed to polar residues. Disordered stretches follow at residues 231 to 329 (QGTP…AAST) and 347 to 373 (GTSAGSSTLRDVVPSPDTQEKGAQEVP). A phosphoserine mark is found at serine 250, serine 259, serine 283, serine 287, and serine 299. The segment covering 259-291 (SPLSSPLSSMKSSISSPPSHCSVKSPVSSPNNV) has biased composition (low complexity). The span at 292–329 (TLRSSVSSPANINNSRCSVSSPSNTNNRSTLSSPAAST) shows a compositional bias: polar residues. 8 residues coordinate Zn(2+): cysteine 603, cysteine 606, cysteine 620, cysteine 623, cysteine 639, cysteine 645, cysteine 655, and cysteine 658. 2 NR C4-type zinc fingers span residues 603–623 (CLVCGDEASGCHYGVVTCGSC) and 639–663 (CAGRNDCIIDKIRRKNCPACRLQKC). Residues 603-668 (CLVCGDEASG…RLQKCLQAGM (66 aa)) constitute a DNA-binding region (nuclear receptor). The tract at residues 669–725 (NLGARKSKKLGKLKGIHEEQPQQQQPPPPPPPPQSPEEGTTYIAPAKEPSVNTALVP) is hinge. Residues 684–710 (IHEEQPQQQQPPPPPPPPQSPEEGTTY) are disordered. Pro residues predominate over residues 692–703 (QQPPPPPPPPQS). Residues 726 to 964 (QLSTISRALT…EFPAMLVEII (239 aa)) enclose the NR LBD domain. 21-hydroxyprogesterone contacts are provided by asparagine 770 and glutamine 776. Aldosterone contacts are provided by asparagine 770 and glutamine 776. Positions 770 and 776 each coordinate progesterone. The tract at residues 782–785 (KWAK) is important for coactivator binding. 21-hydroxyprogesterone is bound by residues arginine 817 and threonine 945. Residues arginine 817 and threonine 945 each contribute to the aldosterone site. Progesterone-binding residues include arginine 817 and threonine 945.

Belongs to the nuclear hormone receptor family. NR3 subfamily. Heteromultimeric cytoplasmic complex with HSP90, HSP70, and FKBP4, in the absence of ligand. After ligand binding, it translocates to the nucleus and binds to DNA as a homodimer and as a heterodimer with NR3C1. May interact with HSD11B2 in the absence of ligand. Binds the coactivators NCOA1, NCOA2, TIF1 and NRIP1. Phosphorylated. In terms of tissue distribution, ubiquitous. Highly expressed in distal tubules, convoluted tubules and cortical collecting duct in kidney, and in sweat glands. Detected at lower levels in cardiomyocytes, in epidermis and in colon enterocytes.

The protein resides in the cytoplasm. It is found in the nucleus. Its subcellular location is the endoplasmic reticulum membrane. In terms of biological role, receptor for both mineralocorticoids (MC) such as aldosterone and glucocorticoids (GC) such as corticosterone or cortisol. Binds to mineralocorticoid response elements (MRE) and transactivates target genes. The effect of MC is to increase ion and water transport and thus raise extracellular fluid volume and blood pressure and lower potassium levels. In Homo sapiens (Human), this protein is Mineralocorticoid receptor (NR3C2).